The sequence spans 445 residues: Exodeoxyribonuclease 7 large subunit (445 aa).

Belongs to the XseA family. As to quaternary structure, heterooligomer composed of large and small subunits.

The protein localises to the cytoplasm. The enzyme catalyses Exonucleolytic cleavage in either 5'- to 3'- or 3'- to 5'-direction to yield nucleoside 5'-phosphates.. Functionally, bidirectionally degrades single-stranded DNA into large acid-insoluble oligonucleotides, which are then degraded further into small acid-soluble oligonucleotides. The polypeptide is Exodeoxyribonuclease 7 large subunit (Delftia acidovorans (strain DSM 14801 / SPH-1)).